The sequence spans 1072 residues: MPKRLDINTILVIGSGPIVIGQAAEFDYSGTQACQSLKEEGYKVILVNSNPATIMTDTATADKVYIEPLTLEFVSRIIRKERPDAILPTLGGQTGLNMAVELAKSGVLEECGVEILGTKLSAIEQAEDRDLFRTLMQDLNEPTPPSEIIHNLDEAYGFVNEIGYPVIVRPAFTLGGTGGGICHNEEELIEIVTSGLKHSPVTQCLLEKSIAGCKEIEYEVMRDSNDNAIVVCNMENIDPVGVHTGDSIVVAPSQTLSDREYQMLRNTSLRIIRALGIEGGCNVQLALDPYSFQYYVIEVNPRVSRSSALASKATGYPIAKLAAKIAVGLTLDEIVNPVTQKTYACFEPALDYVVSKIPRWPFDKFESANRTLGTQMKATGEVMSIGRNLEESLLKAVRSLELGIYHLELDHLKELDKETMKKRIIKADDERLFIVAEAIRQGVTKEEINEWCEMDFFFLQKVENIVNMEREVKANVGNMEVLQTAKEMGFSDHYIAAAWNKTEREIYDMRKENNMTPVFKMVDTCAAEFESATPYYYSTYADENESIVTDRKSVVVLGSGPIRIGQGVEFDYATVHSVWAIKEAGYEAIIINNNPETVSTDFSISDKLYFEPLTIEDVMHIIDLEKPEGVIVQFGGQTAINLAAKLEEHGVKILGTSLEDLDRAEDRDKFEAALTKLGIPQPVGKTATTVEQAVAIAEEIGYPVLVRPSYVLGGRAMEIVYRQEELLHYMKNAVKVHADHPVLIDRYMVGKEIEVDAISDGENVFIPGIMEHIERAGVHSGDSIGVYPPQSLSEKLKEQIIEHTIALGKGLNIVGLLNIQFVVFKDQVYVIEVNPRASRTVPFLSKITGVPMANVATKVILGQNLVEQGYGTGYHPEEKEVYVKAPVFSFAKLRSVDTTLGPEMKSTGEVMGKDLTLEKALYKGLVASGINIPTHGSVIITVADKDKEEAMEIAKRFHEIGYNLLATAGTAQSLAEQNIPVQVVNKIDSEEYNLLDIIRQGKAQFVINTLTKGKQPARDGFRIRRESVENGVACLTSLDTTRAILRVLESMTFSAHSMKEITQTKRHEVVHA.

Positions 1-401 (MPKRLDINTI…SLLKAVRSLE (401 aa)) are carboxyphosphate synthetic domain. 12 residues coordinate ATP: arginine 129, arginine 169, glycine 175, glycine 176, lysine 208, isoleucine 210, glutamate 215, glycine 241, valine 242, histidine 243, glutamine 284, and glutamate 298. The ATP-grasp 1 domain maps to 133-327 (RTLMQDLNEP…IAKLAAKIAV (195 aa)). Mg(2+) contacts are provided by glutamine 284, glutamate 298, and asparagine 300. Mn(2+)-binding residues include glutamine 284, glutamate 298, and asparagine 300. The oligomerization domain stretch occupies residues 402-546 (LGIYHLELDH…YSTYADENES (145 aa)). Residues 547 to 929 (IVTDRKSVVV…ALYKGLVASG (383 aa)) are carbamoyl phosphate synthetic domain. The ATP-grasp 2 domain maps to 671 to 861 (EAALTKLGIP…MANVATKVIL (191 aa)). ATP is bound by residues arginine 707, arginine 746, glutamate 752, glycine 777, valine 778, histidine 779, serine 780, glutamine 820, and glutamate 832. Residues glutamine 820, glutamate 832, and asparagine 834 each contribute to the Mg(2+) site. Residues glutamine 820, glutamate 832, and asparagine 834 each contribute to the Mn(2+) site. Residues 930–1072 (INIPTHGSVI…QTKRHEVVHA (143 aa)) form the MGS-like domain. The tract at residues 930-1072 (INIPTHGSVI…QTKRHEVVHA (143 aa)) is allosteric domain.

This sequence belongs to the CarB family. Composed of two chains; the small (or glutamine) chain promotes the hydrolysis of glutamine to ammonia, which is used by the large (or ammonia) chain to synthesize carbamoyl phosphate. Tetramer of heterodimers (alpha,beta)4. Mg(2+) serves as cofactor. Requires Mn(2+) as cofactor.

It carries out the reaction hydrogencarbonate + L-glutamine + 2 ATP + H2O = carbamoyl phosphate + L-glutamate + 2 ADP + phosphate + 2 H(+). It catalyses the reaction hydrogencarbonate + NH4(+) + 2 ATP = carbamoyl phosphate + 2 ADP + phosphate + 2 H(+). It functions in the pathway amino-acid biosynthesis; L-arginine biosynthesis; carbamoyl phosphate from bicarbonate: step 1/1. The protein operates within pyrimidine metabolism; UMP biosynthesis via de novo pathway; (S)-dihydroorotate from bicarbonate: step 1/3. Functionally, large subunit of the glutamine-dependent carbamoyl phosphate synthetase (CPSase). CPSase catalyzes the formation of carbamoyl phosphate from the ammonia moiety of glutamine, carbonate, and phosphate donated by ATP, constituting the first step of 2 biosynthetic pathways, one leading to arginine and/or urea and the other to pyrimidine nucleotides. The large subunit (synthetase) binds the substrates ammonia (free or transferred from glutamine from the small subunit), hydrogencarbonate and ATP and carries out an ATP-coupled ligase reaction, activating hydrogencarbonate by forming carboxy phosphate which reacts with ammonia to form carbamoyl phosphate. This is Carbamoyl phosphate synthase large chain from Bacillus cereus (strain AH187).